The chain runs to 238 residues: ATP-dependent Clp protease ATP-binding subunit CLPT1, chloroplastic (238 aa).

The transit peptide at 1–64 (MASYTVSFIP…VPKLRCLTSA (64 aa)) directs the protein to the chloroplast. The region spanning 83 to 228 (IPKWSARAIK…KEVEKSMNED (146 aa)) is the Clp R domain. Repeat regions lie at residues 86 to 151 (WSAR…LGKS) and 163 to 228 (LTEP…MNED).

Belongs to the ClpA/ClpB family. In terms of assembly, monomer and homodimer. Binds to the CLP3-6 ring (P-ring). The dimers monomerize before association to the P-ring. Component of the chloroplastic Clp protease core complex which consist of at least 16 proteins: CLPP4 (3 copies), CLPP5 (3 copies), CLPR4 (2 copies), ClpP1 (1 copy), CLPP6 (1 copy), CLPR2 (1 copy), CLPT1 (1 copy), CLPT2 (1 copy) and 3 copies of CLPP3 and/or CLPR1 and/or CLPR3. Interacts with CLPC2 and CLPD. Interacts with CPN21. No interactions with CLPS1.

The protein localises to the plastid. It is found in the chloroplast. Accessory protein regulating the assembly of the plastidial Clp protease system. CLPT1 first binds to the heptameric P-ring containing the CLP3-6 subunits followed by CLPT2, and only then does the P-ring combine with the R-ring composed of the clpP1 and CLPR1-4 subunits. Once the core complex is fully assembled, it then associates to the CLPC chaperone partner to form the functional protease. CLPT1 and CLPT2 are partially redundant. The polypeptide is ATP-dependent Clp protease ATP-binding subunit CLPT1, chloroplastic (Arabidopsis thaliana (Mouse-ear cress)).